The following is a 448-amino-acid chain: MSSRKLSGPKGRRLSIHVVTWNVASAAPPLDLSDLLQLNNRNLNLDIYVIGLQELNSGIISLLSDAAFNDSWSSFLMDVLSPLSFIKVSHVRMQGILLLVFAKYQHLPYIQILSTKSTPTGLFGYWGNKGGVNICLKLYGYYVSIINCHLPPHISNNYQRLEHFDRILEMQNCEGRDIPNILDHDLIIWFGDMNFRIEDFGLHFVRESIKNRCYGGLWEKDQLSIAKKHDPLLREFQEGRLLFPPTYKFDRNSNDYDTSEKKRKPAWTDRILWRLKRQPCAGPDTPIPPASHFSLSLRGYSSHMTYGISDHKPVSGTFDLELKPLVSAPLIVLMPEDLWTVENDMMVSYSSTSDFPSSPWDWIGLYKVGLRDVNDYVSYAWVGDSKVSCSDNLNQVYIDISNIPTTEDEFLLCYYSNSLRSVVGISRPFQIPPGSLREDPLGEAQPQI.

Positions isoleucine 16 to phenylalanine 318 are catalytic. Residues phenylalanine 318 to isoleucine 448 form a required for interaction with GPR78 and PAK1 region. The interval glutamate 321–isoleucine 448 is required for ruffle localization.

It belongs to the inositol 1,4,5-trisphosphate 5-phosphatase type II family. In terms of assembly, interacts with GPR78; necessary for INPP5K localization at the endoplasmic reticulum. Interacts with PAK1; competes with GPR78. As to expression, ubiquitously expressed with highest levels in skeletal muscle, heart and kidney.

It is found in the endoplasmic reticulum. The protein localises to the cytoplasm. It carries out the reaction 1D-myo-inositol 1,4,5-trisphosphate + H2O = 1D-myo-inositol 1,4-bisphosphate + phosphate. It catalyses the reaction 1D-myo-inositol 1,3,4,5-tetrakisphosphate + H2O = 1D-myo-inositol 1,3,4-trisphosphate + phosphate. The enzyme catalyses a 1,2-diacyl-sn-glycero-3-phospho-(1D-myo-inositol-4,5-bisphosphate) + H2O = a 1,2-diacyl-sn-glycero-3-phospho-(1D-myo-inositol 4-phosphate) + phosphate. The catalysed reaction is a 1,2-diacyl-sn-glycero-3-phospho-(1D-myo-inositol-3,4,5-trisphosphate) + H2O = a 1,2-diacyl-sn-glycero-3-phospho-(1D-myo-inositol-3,4-bisphosphate) + phosphate. It carries out the reaction 1,2-dioctanoyl-sn-glycero-3-phospho-(1D-myo-inositol-3,4,5-trisphosphate) + H2O = 1,2-dioctanoyl-sn-glycero-3-phospho-(1D-myo-inositol-3,4-bisphosphate) + phosphate. Functionally, inositol 5-phosphatase which acts on inositol 1,4,5-trisphosphate, inositol 1,3,4,5-tetrakisphosphate, phosphatidylinositol 4,5-bisphosphate and phosphatidylinositol 3,4,5-trisphosphate. Has 6-fold higher affinity for phosphatidylinositol 4,5-bisphosphate than for inositol 1,4,5-trisphosphate. Negatively regulates assembly of the actin cytoskeleton. Controls insulin-dependent glucose uptake among inositol 3,4,5-trisphosphate phosphatases; therefore, is the specific regulator for insulin signaling in skeletal muscle. This Homo sapiens (Human) protein is Inositol polyphosphate 5-phosphatase K.